Here is a 927-residue protein sequence, read N- to C-terminus: Ribosome-releasing factor 2, mitochondrial (927 aa).

The N-terminal 57 residues, 1–57 (MVTAPLLGWVAVRPIPRLSKLNTCKYVSSSLQSYKRSVGSCLGKQQSRDFSYSATLT), are a transit peptide targeting the mitochondrion. Positions 64–379 (EKTRNIGIIA…AVNNLLPGPS (316 aa)) constitute a tr-type G domain. GTP contacts are provided by residues 73-80 (AHIDAGKT), 163-167 (DTPGH), and 217-220 (NKLD).

The protein belongs to the TRAFAC class translation factor GTPase superfamily. Classic translation factor GTPase family. EF-G/EF-2 subfamily.

The protein localises to the mitochondrion. Functionally, mitochondrial GTPase that mediates the disassembly of ribosomes from messenger RNA at the termination of mitochondrial protein biosynthesis. Not involved in the GTP-dependent ribosomal translocation step during translation elongation. This chain is Ribosome-releasing factor 2, mitochondrial (mef2), found in Talaromyces marneffei (strain ATCC 18224 / CBS 334.59 / QM 7333) (Penicillium marneffei).